A 389-amino-acid polypeptide reads, in one-letter code: Allantoicase (389 aa).

The protein belongs to the allantoicase family.

It carries out the reaction allantoate + H2O = (S)-ureidoglycolate + urea. Its pathway is nitrogen metabolism; (S)-allantoin degradation; (S)-ureidoglycolate from allantoate (aminidohydrolase route): step 1/1. Functionally, utilization of purines as secondary nitrogen sources, when primary sources are limiting. This is Allantoicase (allc) from Xenopus tropicalis (Western clawed frog).